Here is a 335-residue protein sequence, read N- to C-terminus: Fructokinase-2 (335 aa).

Belongs to the carbohydrate kinase PfkB family. As to expression, expressed in roots, at higher levels in stems, and hardly detectable in leaves.

The catalysed reaction is D-fructose + ATP = D-fructose 6-phosphate + ADP + H(+). It functions in the pathway glycan biosynthesis; starch biosynthesis. Its activity is regulated as follows. Inhibited at high fructose. Functionally, may play an important role in maintaining the flux of carbon towards starch formation. May also be involved in a sugar-sensing pathway. This is Fructokinase-2 (FRK2) from Zea mays (Maize).